A 137-amino-acid polypeptide reads, in one-letter code: uncharacterized protein (137 aa).

A helical membrane pass occupies residues 20-42 (TVLAFKGEGALALAGLLVMAAVA).

It is found in the host membrane. This is an uncharacterized protein from Dryophytes versicolor (chameleon treefrog).